Here is a 203-residue protein sequence, read N- to C-terminus: Holliday junction branch migration complex subunit RuvA (203 aa).

The tract at residues Met1 to Asn64 is domain I. A domain II region spans residues Asp65–Asn142. The interval Ser143–Ala154 is flexible linker. Positions Ala155 to Leu203 are domain III.

It belongs to the RuvA family. Homotetramer. Forms an RuvA(8)-RuvB(12)-Holliday junction (HJ) complex. HJ DNA is sandwiched between 2 RuvA tetramers; dsDNA enters through RuvA and exits via RuvB. An RuvB hexamer assembles on each DNA strand where it exits the tetramer. Each RuvB hexamer is contacted by two RuvA subunits (via domain III) on 2 adjacent RuvB subunits; this complex drives branch migration. In the full resolvosome a probable DNA-RuvA(4)-RuvB(12)-RuvC(2) complex forms which resolves the HJ.

Its subcellular location is the cytoplasm. In terms of biological role, the RuvA-RuvB-RuvC complex processes Holliday junction (HJ) DNA during genetic recombination and DNA repair, while the RuvA-RuvB complex plays an important role in the rescue of blocked DNA replication forks via replication fork reversal (RFR). RuvA specifically binds to HJ cruciform DNA, conferring on it an open structure. The RuvB hexamer acts as an ATP-dependent pump, pulling dsDNA into and through the RuvAB complex. HJ branch migration allows RuvC to scan DNA until it finds its consensus sequence, where it cleaves and resolves the cruciform DNA. This Serratia proteamaculans (strain 568) protein is Holliday junction branch migration complex subunit RuvA.